A 904-amino-acid polypeptide reads, in one-letter code: Protein argonaute 4A (904 aa).

Disordered regions lie at residues 1–33 and 143–166; these read MESNSGEIEELPPPPPLPPNAEPIKTDDTKKLS and KSSANGGSPGNDSPGNDRKRVRRP. A compositionally biased stretch (pro residues) spans 11–21; it reads LPPPPPLPPNA. A compositionally biased stretch (low complexity) spans 144–156; the sequence is SSANGGSPGNDSP. The PAZ domain occupies 274–388; sequence PVVDFLLANQ…FPIELCSLVP (115 aa). One can recognise a Piwi domain in the interval 557–865; that stretch reads FLLCVLAERK…AAAQVSQFIK (309 aa). Residues 871–890 are disordered; the sequence is ETSSSHGGHTSAGSAPVPEL. Positions 872-885 are enriched in low complexity; that stretch reads TSSSHGGHTSAGSA.

The protein belongs to the argonaute family. Ago subfamily.

Its function is as follows. Probably involved in the RNA silencing pathway. May bind to short RNAs such as microRNAs (miRNAs) or short interfering RNAs (siRNAs), and represses the translation of mRNAs which are complementary to them. The chain is Protein argonaute 4A (AGO4A) from Oryza sativa subsp. japonica (Rice).